Here is a 396-residue protein sequence, read N- to C-terminus: MSAKKERVVVGLSGGVDSAVSAWLLKQQGHEVVGLFMKNWEDDDDDEYCSSRQDFLDAASVADVIGIEIEHVNFAAEYRDRVFAEFLREYEAGRTPNPDVLCNAEIKFKAFLDHALRLGAGKIATGHYARVRRAPALPGMPDGPLDESSAGALDRARVREAGGRFELLKGLDASKDQSYFLHRLSQAQLARTLFPVGELPKTEVRRIAAEIRLPVAAKKDSTGICFIGERPFREFLNRYLAHAPGPIKDERGRTLGEHVGLSFYTLGQRKGIGIGGVKERGAARGGADHAPWFVARKDRPHNTLYVVQGHDHPWLQSFRLEADDASWIAGTPPAPGALAAKTRYRQADASCVLAPGADGRFRLDFGVPQWAVTPGQSAVLYDGEVCLGGGVIAAAA.

Residues 11-18 (GLSGGVDS) and M37 contribute to the ATP site. Residues 97–99 (NPD) are interaction with target base in tRNA. The active-site Nucleophile is C102. C102 and C225 are oxidised to a cystine. An ATP-binding site is contributed by G126. The tract at residues 175–177 (KDQ) is interaction with tRNA. The active-site Cysteine persulfide intermediate is C225. The segment at 343–344 (RY) is interaction with tRNA.

This sequence belongs to the MnmA/TRMU family.

Its subcellular location is the cytoplasm. The enzyme catalyses S-sulfanyl-L-cysteinyl-[protein] + uridine(34) in tRNA + AH2 + ATP = 2-thiouridine(34) in tRNA + L-cysteinyl-[protein] + A + AMP + diphosphate + H(+). Functionally, catalyzes the 2-thiolation of uridine at the wobble position (U34) of tRNA, leading to the formation of s(2)U34. In Methylibium petroleiphilum (strain ATCC BAA-1232 / LMG 22953 / PM1), this protein is tRNA-specific 2-thiouridylase MnmA.